Consider the following 431-residue polypeptide: Beta-lactamase hydrolase-like protein (431 aa).

H212, H214, and H286 together coordinate Zn(2+). D309 provides a ligand contact to substrate.

The protein belongs to the metallo-beta-lactamase superfamily. Zn(2+) is required as a cofactor.

In terms of biological role, could play a role in cell adherence or biofilm development. The chain is Beta-lactamase hydrolase-like protein from Agrobacterium fabrum (strain C58 / ATCC 33970) (Agrobacterium tumefaciens (strain C58)).